Consider the following 299-residue polypeptide: Phosphatidylinositol-3-phosphatase (299 aa).

An N-terminal signal peptide occupies residues 1-43 (MLRGIQALSRPLTRVYRALAVIGVLAASLLASWVGAVPQVGLA).

As to quaternary structure, monomer. SapM interacts with host RAB7 via its C-terminus. The cofactor is a metal cation.

It is found in the secreted. The protein resides in the host cytoplasmic vesicle. Its subcellular location is the host phagosome. It catalyses the reaction a phosphate monoester + H2O = an alcohol + phosphate. The catalysed reaction is a 1,2-diacyl-sn-glycero-3-phospho-(1D-myo-inositol-3-phosphate) + H2O = a 1,2-diacyl-sn-glycero-3-phospho-(1D-myo-inositol) + phosphate. With respect to regulation, phosphatase activity is inhibited in vitro by low concentrations of several heavy metals (zinc chloride, sodium molybdate, magnesium chloride, and copper sulfate) and moderately high concentrations (&gt;8 mM) of EDTA. Its function is as follows. Virulence factor that plays an important role in blocking phagosome-lysosome fusion and thus participates in the intracellular survival of the pathogen. Acts as a phosphatase that dephosphorylates phosphatidylinositol 3-phosphate (PI3P), a membrane trafficking regulatory lipid essential for phagosomal acquisition of lysosomal constituents. Therefore, SapM eliminates PI3P from the phagosomal membrane by catalyzing its hydrolysis, and thus contributes to inhibition of phagosome maturation. Also interferes with autophagy: SapM blocks autophagosome-lysosome fusion in macrophages by binding to the small GTPase RAB7, which prevents RAB7 from being involved in this process and thus negatively regulates autophagy flux. In vitro, displays phosphatase activity with broad specificity; can dephosphorylate a variety of phosphoester substrates, with the highest activity against phosphoenolpyruvate, glycerophosphate, GTP, NADPH, phosphotyrosine and trehalose-6-phosphate. In contrast, the enzyme exhibits poor activity against glucose-6-phosphate, phosphothreonine, and a number of nucleotides (NADP, ATP, AMP, and GMP). The sequence is that of Phosphatidylinositol-3-phosphatase from Mycobacterium tuberculosis (strain ATCC 25618 / H37Rv).